We begin with the raw amino-acid sequence, 140 residues long: Alpha-lactalbumin (140 aa).

A signal peptide spans 1 to 19 (MMSLLPLLLIGIVLPATQA). One can recognise a C-type lysozyme domain in the interval 20–140 (KDYGKCELNQ…CRENLDQWNC (121 aa)). Intrachain disulfides connect C25/C140, C47/C131, C80/C96, and C92/C110. Ca(2+) contacts are provided by K98, D101, D103, D106, and D107.

In terms of assembly, lactose synthase (LS) is a heterodimer of a catalytic component, beta1,4-galactosyltransferase (beta4Gal-T1) and a regulatory component, alpha-lactalbumin (LA). Mammary gland specific. Secreted in milk.

The protein resides in the secreted. Functionally, regulatory subunit of lactose synthase, changes the substrate specificity of galactosyltransferase in the mammary gland making glucose a good acceptor substrate for this enzyme. This enables LS to synthesize lactose, the major carbohydrate component of milk. In other tissues, galactosyltransferase transfers galactose onto the N-acetylglucosamine of the oligosaccharide chains in glycoproteins. The chain is Alpha-lactalbumin (LALBA) from Trichosurus vulpecula (Brush-tailed possum).